The following is a 242-amino-acid chain: 1-(5-phosphoribosyl)-5-[(5-phosphoribosylamino)methylideneamino] imidazole-4-carboxamide isomerase (242 aa).

D10 functions as the Proton acceptor in the catalytic mechanism. D132 acts as the Proton donor in catalysis.

It belongs to the HisA/HisF family.

Its subcellular location is the cytoplasm. The enzyme catalyses 1-(5-phospho-beta-D-ribosyl)-5-[(5-phospho-beta-D-ribosylamino)methylideneamino]imidazole-4-carboxamide = 5-[(5-phospho-1-deoxy-D-ribulos-1-ylimino)methylamino]-1-(5-phospho-beta-D-ribosyl)imidazole-4-carboxamide. Its pathway is amino-acid biosynthesis; L-histidine biosynthesis; L-histidine from 5-phospho-alpha-D-ribose 1-diphosphate: step 4/9. This is 1-(5-phosphoribosyl)-5-[(5-phosphoribosylamino)methylideneamino] imidazole-4-carboxamide isomerase from Methanothrix thermoacetophila (strain DSM 6194 / JCM 14653 / NBRC 101360 / PT) (Methanosaeta thermophila).